The chain runs to 695 residues: Protein MALE DISCOVERER 1 (695 aa).

The first 29 residues, 1–29 (MGCRWNPIGFQFSCFMFLIITLQSRSSLS), serve as a signal peptide directing secretion. Residues 30–340 (LESEGFVLLK…SKGFKDVWLY (311 aa)) lie on the Extracellular side of the membrane. N-linked (GlcNAc...) asparagine glycans are attached at residues asparagine 56 and asparagine 80. 4 LRR repeats span residues 75–98 (KVQMLNLSGCSLGGTLAPELSQLS), 99–121 (ELRSLILSKNKLSGDIPNEFASF), 123–144 (KLEFLDLRDNNLNGVVPPELNK), and 147–168 (TPENLLLSGNKFAGFMTVKFLR). N-linked (GlcNAc...) asparagine glycosylation occurs at asparagine 247. Residues 302–325 (PPLIPPSSPPPLPTNNTIASDPPR) are disordered. Residues 303–314 (PLIPPSSPPPLP) show a composition bias toward pro residues. The N-linked (GlcNAc...) asparagine glycan is linked to asparagine 316. The chain crosses the membrane as a helical span at residues 341 to 361 (VVIGVAAFVAMLIIVAVIFFF). Topologically, residues 362-695 (RKRAVKSIGP…ELEILSSEAT (334 aa)) are cytoplasmic. The 306-residue stretch at 363 to 668 (KRAVKSIGPW…YVVQQLKEVI (306 aa)) folds into the Protein kinase domain. At serine 652 the chain carries Phosphoserine.

This sequence belongs to the protein kinase superfamily. Ser/Thr protein kinase family. Homodimer. Interacts with MIK1, MIK2 and LURE1.2. LURE1.2 enhances the heterodimerization of MDIS1 with MIK1 or MIK2. In terms of processing, phosphorylated by MIK1. Expressed in pollen tubes and seedlings.

The protein resides in the cell membrane. The protein localises to the endomembrane system. The catalysed reaction is L-seryl-[protein] + ATP = O-phospho-L-seryl-[protein] + ADP + H(+). It carries out the reaction L-threonyl-[protein] + ATP = O-phospho-L-threonyl-[protein] + ADP + H(+). Functionally, involved in the pollen tube perception of the female signal. In Arabidopsis thaliana (Mouse-ear cress), this protein is Protein MALE DISCOVERER 1.